The chain runs to 520 residues: MEASLHFPIDASLRAAVAVISAGAFYLLNLVIYRLFLSPLAKFPGPKLAAVTSWYELYYDLVHKGKYLFEIEKMHDKYGPIVRINPFELSIRDSEYYDELYVAGSVRPTDRYEAFVEGIVDFKGSHIATIEHDLHRKRRKPLDPYFSRLGVSRLEPMLGELTEKLIVNRFESFKRTGKVVRLDHAFTAYSGDVINRLCMDDPPDVLVDDPEFSPWWYNMFHNGIATLPLFMGLPWLIHVVRLIPVSILAKLDPGTQTFNKFKMMCDDHLRVAKREKAAQGSKDTSMMDARPTIFRHLLNSDLPPSELTDDLLSKEAQVLIGTGTITTAGSLCFICYHIVVNPAIKKRLQEDLKLIMANYPAKKPTWAELETATYLQAVIKEGLRLSFGTMHRRTRVSPKQPLQFRQWTIPAGVPVGMSAYYAHRDPSVFPRPDEFLPERWLSNVTPEMSRNYVPFSRGSRRCLGMNLAYAEINHVIATLFRPGGPDFKLYETSEKDVKPAHDLIVPLPSLESKGFRVIFR.

The next 3 helical transmembrane spans lie at 17 to 37, 229 to 249, and 320 to 340; these read VAVISAGAFYLLNLVIYRLFL, LFMGLPWLIHVVRLIPVSILA, and IGTGTITTAGSLCFICYHIVV. Residue cysteine 462 coordinates heme.

Belongs to the cytochrome P450 family. Requires heme as cofactor.

It is found in the membrane. It participates in secondary metabolite biosynthesis; terpenoid biosynthesis. Cytochrome P450 monooxygenase; part of the gene cluster that mediates the biosynthesis of the sesterterpenes ophiobolins, fungal phytotoxins with potential anti-cancer activities. The first step of the pathway is performed by the sesterterpene synthase oblA that possesses both prenyl transferase and terpene cyclase activity, converting isopentenyl diphosphate and dimethylallyl diphosphate into geranylfarnesyl diphosphate (GFPP) and further converting GFPP into ophiobolin F, respectively. Other sesterterpenoids (C(25) terpenoids) are found as minor products of oblA. It is expected that ophiobolin F is then oxidized to ophiobolin A via ophiobolin C and ophiobolin B intermediates by the combined action of the cytochrome P450 monooxygenase oblB and the FAD-dependent oxidoreductase oblC. Although oblB catalyzes multistep oxygenations at C5 and C21/C7 in a relatively efficient manner, it is unable to convert ophiobolin F to ophiobolin C and produces instead several unexpected derivatives. The polypeptide is Cytochrome P450 monooxygenase oblB (Aspergillus clavatus (strain ATCC 1007 / CBS 513.65 / DSM 816 / NCTC 3887 / NRRL 1 / QM 1276 / 107)).